Consider the following 514-residue polypeptide: 2,3-bisphosphoglycerate-independent phosphoglycerate mutase (514 aa).

Mn(2+)-binding residues include Asp14 and Ser64. Ser64 functions as the Phosphoserine intermediate in the catalytic mechanism. Substrate contacts are provided by residues His125, 155–156, Arg187, Arg193, 263–266, and Lys336; these read RD and RADR. Residues Asp403, His407, Asp444, His445, and His463 each coordinate Mn(2+).

It belongs to the BPG-independent phosphoglycerate mutase family. In terms of assembly, monomer. The cofactor is Mn(2+).

It catalyses the reaction (2R)-2-phosphoglycerate = (2R)-3-phosphoglycerate. It functions in the pathway carbohydrate degradation; glycolysis; pyruvate from D-glyceraldehyde 3-phosphate: step 3/5. Its function is as follows. Catalyzes the interconversion of 2-phosphoglycerate and 3-phosphoglycerate. The polypeptide is 2,3-bisphosphoglycerate-independent phosphoglycerate mutase (Shewanella putrefaciens (strain CN-32 / ATCC BAA-453)).